Reading from the N-terminus, the 207-residue chain is UPF0319 protein VV1_2115 (207 aa).

A signal peptide spans 1 to 18 (MLRVLGLAGMLMSFNIHA).

It belongs to the UPF0319 family.

The polypeptide is UPF0319 protein VV1_2115 (Vibrio vulnificus (strain CMCP6)).